The chain runs to 229 residues: Glucose-induced degradation protein 8-B homolog (229 aa).

In terms of domain architecture, LisH spans 26–58; that stretch reads QRADMNRLIMNYLVTEGFKEAAEKFRMESGIEP. In terms of domain architecture, CTLH spans 64–121; the sequence is SLDERIKIREMVLKGQIQEAIALINSLHPELLDTNRYLYFHLQQQHLIELIRLRETEA.

As to quaternary structure, identified in the CTLH complex that contains at least MAEA, RMND5A (or alternatively its paralog RMND5B), GID8, WDR26, and RANBP9 and/or RANBP10. Interacts with CTNNB1.

The protein localises to the cytoplasm. The protein resides in the nucleus. Functionally, core component of the CTLH E3 ubiquitin-protein ligase complex that selectively accepts ubiquitin from UBE2H and mediates ubiquitination and subsequent proteasomal degradation of target proteins. Acts as a positive regulator of Wnt signaling pathway by promoting beta-catenin (CTNNB1) nuclear accumulation. Required for normal Wnt signaling and normal dorsoventral patterning during embryogenesis. The protein is Glucose-induced degradation protein 8-B homolog (gid8b) of Danio rerio (Zebrafish).